The primary structure comprises 148 residues: Macrodomain Ter protein (148 aa).

Belongs to the MatP family. In terms of assembly, homodimer.

Its subcellular location is the cytoplasm. Required for spatial organization of the terminus region of the chromosome (Ter macrodomain) during the cell cycle. Prevents early segregation of duplicated Ter macrodomains during cell division. Binds specifically to matS, which is a 13 bp signature motif repeated within the Ter macrodomain. This Aliivibrio salmonicida (strain LFI1238) (Vibrio salmonicida (strain LFI1238)) protein is Macrodomain Ter protein.